The primary structure comprises 220 residues: Protein-L-isoaspartate O-methyltransferase (220 aa).

Ser65 is a catalytic residue.

Belongs to the methyltransferase superfamily. L-isoaspartyl/D-aspartyl protein methyltransferase family.

The protein localises to the cytoplasm. It catalyses the reaction [protein]-L-isoaspartate + S-adenosyl-L-methionine = [protein]-L-isoaspartate alpha-methyl ester + S-adenosyl-L-homocysteine. Its function is as follows. Catalyzes the methyl esterification of L-isoaspartyl residues in peptides and proteins that result from spontaneous decomposition of normal L-aspartyl and L-asparaginyl residues. It plays a role in the repair and/or degradation of damaged proteins. The polypeptide is Protein-L-isoaspartate O-methyltransferase (pcm) (Pyrococcus horikoshii (strain ATCC 700860 / DSM 12428 / JCM 9974 / NBRC 100139 / OT-3)).